A 138-amino-acid polypeptide reads, in one-letter code: Cysteine desulfuration protein SufE (138 aa).

The Cysteine persulfide intermediate role is filled by Cys51.

It belongs to the SufE family. Homodimer. Interacts with SufS.

It is found in the cytoplasm. It functions in the pathway cofactor biosynthesis; iron-sulfur cluster biosynthesis. Functionally, participates in cysteine desulfuration mediated by SufS. Cysteine desulfuration mobilizes sulfur from L-cysteine to yield L-alanine and constitutes an essential step in sulfur metabolism for biosynthesis of a variety of sulfur-containing biomolecules. Functions as a sulfur acceptor for SufS, by mediating the direct transfer of the sulfur atom from the S-sulfanylcysteine of SufS, an intermediate product of cysteine desulfuration process. This is Cysteine desulfuration protein SufE from Escherichia coli O157:H7.